A 662-amino-acid chain; its full sequence is UvrABC system protein B (662 aa).

The Helicase ATP-binding domain occupies 31–188 (DNIEGGEKAQ…NDLVDIQFER (158 aa)). 44 to 51 (GATGTGKT) contacts ATP. Positions 97–120 (YYDYYQPEAYVPSSDTYIEKDSSV) match the Beta-hairpin motif. One can recognise a Helicase C-terminal domain in the interval 435-601 (QIDDLLGEIN…TIKKEIRDLI (167 aa)). The UVR domain occupies 626 to 661 (KDMIKKLEGQMQEAAGLLDFELAAQIRDMILEIKAM).

It belongs to the UvrB family. As to quaternary structure, forms a heterotetramer with UvrA during the search for lesions. Interacts with UvrC in an incision complex.

The protein localises to the cytoplasm. The UvrABC repair system catalyzes the recognition and processing of DNA lesions. A damage recognition complex composed of 2 UvrA and 2 UvrB subunits scans DNA for abnormalities. Upon binding of the UvrA(2)B(2) complex to a putative damaged site, the DNA wraps around one UvrB monomer. DNA wrap is dependent on ATP binding by UvrB and probably causes local melting of the DNA helix, facilitating insertion of UvrB beta-hairpin between the DNA strands. Then UvrB probes one DNA strand for the presence of a lesion. If a lesion is found the UvrA subunits dissociate and the UvrB-DNA preincision complex is formed. This complex is subsequently bound by UvrC and the second UvrB is released. If no lesion is found, the DNA wraps around the other UvrB subunit that will check the other stand for damage. In Streptococcus gordonii (strain Challis / ATCC 35105 / BCRC 15272 / CH1 / DL1 / V288), this protein is UvrABC system protein B.